A 571-amino-acid polypeptide reads, in one-letter code: Proline--tRNA ligase (571 aa).

Belongs to the class-II aminoacyl-tRNA synthetase family. ProS type 1 subfamily. In terms of assembly, homodimer.

The protein localises to the cytoplasm. The catalysed reaction is tRNA(Pro) + L-proline + ATP = L-prolyl-tRNA(Pro) + AMP + diphosphate. Functionally, catalyzes the attachment of proline to tRNA(Pro) in a two-step reaction: proline is first activated by ATP to form Pro-AMP and then transferred to the acceptor end of tRNA(Pro). As ProRS can inadvertently accommodate and process non-cognate amino acids such as alanine and cysteine, to avoid such errors it has two additional distinct editing activities against alanine. One activity is designated as 'pretransfer' editing and involves the tRNA(Pro)-independent hydrolysis of activated Ala-AMP. The other activity is designated 'posttransfer' editing and involves deacylation of mischarged Ala-tRNA(Pro). The misacylated Cys-tRNA(Pro) is not edited by ProRS. This is Proline--tRNA ligase from Pseudomonas putida (strain GB-1).